The primary structure comprises 506 residues: ATP synthase subunit alpha (506 aa).

171–178 is a binding site for ATP; the sequence is GDRQTGKT.

The protein belongs to the ATPase alpha/beta chains family. In terms of assembly, F-type ATPases have 2 components, CF(1) - the catalytic core - and CF(0) - the membrane proton channel. CF(1) has five subunits: alpha(3), beta(3), gamma(1), delta(1), epsilon(1). CF(0) has four main subunits: a, b, b' and c.

It is found in the cellular thylakoid membrane. It carries out the reaction ATP + H2O + 4 H(+)(in) = ADP + phosphate + 5 H(+)(out). Functionally, produces ATP from ADP in the presence of a proton gradient across the membrane. The alpha chain is a regulatory subunit. This Nostoc punctiforme (strain ATCC 29133 / PCC 73102) protein is ATP synthase subunit alpha.